The sequence spans 96 residues: Co-chaperonin GroES (96 aa).

It belongs to the GroES chaperonin family. As to quaternary structure, heptamer of 7 subunits arranged in a ring. Interacts with the chaperonin GroEL.

It is found in the cytoplasm. Functionally, together with the chaperonin GroEL, plays an essential role in assisting protein folding. The GroEL-GroES system forms a nano-cage that allows encapsulation of the non-native substrate proteins and provides a physical environment optimized to promote and accelerate protein folding. GroES binds to the apical surface of the GroEL ring, thereby capping the opening of the GroEL channel. This chain is Co-chaperonin GroES, found in Leptothrix cholodnii (strain ATCC 51168 / LMG 8142 / SP-6) (Leptothrix discophora (strain SP-6)).